Consider the following 348-residue polypeptide: Tocopherol O-methyltransferase, chloroplastic (348 aa).

The transit peptide at M1–A51 directs the protein to the chloroplast. Residue A52 is modified to N-acetylalanine. Residues V130–G139 are SAM motif I. Positions G193–M201 are SAM motif II. Residues V220–I229 are SAM motif III.

Belongs to the class I-like SAM-binding methyltransferase superfamily. gTMT family.

The protein resides in the plastid. It localises to the chloroplast. It catalyses the reaction gamma-tocopherol + S-adenosyl-L-methionine = (+)-alpha-tocopherol + S-adenosyl-L-homocysteine + H(+). The catalysed reaction is delta-tocotrienol + S-adenosyl-L-methionine = beta-tocotrienol + S-adenosyl-L-homocysteine + H(+). It carries out the reaction gamma-tocotrienol + S-adenosyl-L-methionine = alpha-tocotrienol + S-adenosyl-L-homocysteine + H(+). The enzyme catalyses delta-tocopherol + S-adenosyl-L-methionine = beta-tocopherol + S-adenosyl-L-homocysteine + H(+). The protein operates within cofactor biosynthesis; tocopherol biosynthesis. Functionally, involved in the synthesis of tocopherol (vitamin E). Methylates gamma- and delta-tocopherol to form beta- and alpha-tocopherol, respectively. In Arabidopsis thaliana (Mouse-ear cress), this protein is Tocopherol O-methyltransferase, chloroplastic (VTE4).